Consider the following 440-residue polypeptide: Protein eva-1 homolog C (440 aa).

Pro residues predominate over residues 1 to 13 (MLLPGHPRPPPAP). A disordered region spans residues 1 to 23 (MLLPGHPRPPPAPQSAQNQGLRR). The N-terminal stretch at 1-48 (MLLPGHPRPPPAPQSAQNQGLRRQVEPPGQLLRLFYCTVLVCSKETSA) is a signal peptide. Residues 49–321 (LTDFSGYLTK…AYIRAHPERA (273 aa)) are Extracellular-facing. 3 N-linked (GlcNAc...) asparagine glycosylation sites follow: N62, N109, and N165. The region spanning 67–159 (ACDGDYLNLQ…KYLLVSFKCQ (93 aa)) is the SUEL-type lectin 1 domain. An SUEL-type lectin 2 domain is found at 168 to 260 (VCENQELKLH…KYLTVAYACV (93 aa)). Residues 322-342 (ALLFMSSVCIGLLLTLCALVI) form a helical membrane-spanning segment. Over 343 to 440 (RVSCTKDFRE…SLPRNVGHFY (98 aa)) the chain is Cytoplasmic. The interval 364 to 384 (SDKAEEDSEEDLEEEDSSDSQ) is disordered. A compositionally biased stretch (acidic residues) spans 367 to 381 (AEEDSEEDLEEEDSS).

The protein belongs to the EVA1 family. Ubiquitous.

It is found in the cell membrane. Binds heparin. The protein is Protein eva-1 homolog C (Eva1c) of Mus musculus (Mouse).